The primary structure comprises 78 residues: MPRKPVRKVASTPRPNPLDQNGITYIDYKDTDLLRKFLSDRGKIRSRRVTRVTAQQQRLLARAVKNAREMALLPYSSR.

The tract at residues 1–22 (MPRKPVRKVASTPRPNPLDQNG) is disordered.

It belongs to the bacterial ribosomal protein bS18 family. As to quaternary structure, part of the 30S ribosomal subunit. Forms a tight heterodimer with protein bS6.

Its function is as follows. Binds as a heterodimer with protein bS6 to the central domain of the 16S rRNA, where it helps stabilize the platform of the 30S subunit. The polypeptide is Small ribosomal subunit protein bS18B (Streptomyces avermitilis (strain ATCC 31267 / DSM 46492 / JCM 5070 / NBRC 14893 / NCIMB 12804 / NRRL 8165 / MA-4680)).